We begin with the raw amino-acid sequence, 508 residues long: MQRLLTPVRQVLQVKRVMQEASLLPARLLPAAHPSFSTVPAVPLAKTDTWPKDVGILAMEVYFPAQYVDQTELEKFNKVEAGRYTVGLGQTQMGFCSVQEDVNSLCLTVVQQLMERTQLPWDSVGRLEVGTETIIDKSKAVKTVLMELFQDSGNTDIEGIDTTNACYGGTASLFNAANWMESSSWDGRYALVVCGDIAVYPSGNARPTGGAGAVAMLVGPEAPLVLERGLRGTHMENVYDFYKPDVTSEYPLVDGKLSIQCYLRALDKCYAFYRQKIEKQWKQAGIDRPFTLDDVQYMIFHTPFCKLVQKSLARLMFNDFLLASGDTQTGIYKGLEAFRGLKLEDTYTNKDVDKAFLKASLNMFNKKTKNSLYLSTYNGNMYTSSLYGCLASLLAHHSAQDLAGSRIGAFSYGSGLAASFFSFRVSQDASPGSPLEKLVSSTSDLQKRLASRKRVSPEEFTEIMNQREQYYHKMNFSPPGDKNSLFPGTWYLERVDELYRRKYARRPV.

The transit peptide at 1-37 (MQRLLTPVRQVLQVKRVMQEASLLPARLLPAAHPSFS) directs the protein to the mitochondrion. The residue at position 52 (Lys52) is an N6-succinyllysine. Residues Glu80 and Ala81 each contribute to the (3S)-3-hydroxy-3-methylglutaryl-CoA site. Glu132 (proton donor/acceptor) is an active-site residue. 3 residues coordinate (3S)-3-hydroxy-3-methylglutaryl-CoA: Cys166, Asn204, and Thr208. The active-site Acyl-thioester intermediate is Cys166. Lys243 is modified (N6-acetyllysine). Residue Lys256 is modified to N6-acetyllysine; alternate. Residue Lys256 is modified to N6-succinyllysine; alternate. Residues Ser258 and His301 each contribute to the (3S)-3-hydroxy-3-methylglutaryl-CoA site. His301 acts as the Proton donor/acceptor in catalysis. N6-acetyllysine is present on Lys306. Lys310 serves as a coordination point for (3S)-3-hydroxy-3-methylglutaryl-CoA. Position 310 is an N6-acetyllysine; alternate (Lys310). Lys310 carries the post-translational modification N6-succinyllysine; alternate. The residue at position 333 (Lys333) is an N6-succinyllysine. Residues Lys342, Lys350, Lys354, and Lys358 each carry the N6-acetyllysine; alternate modification. Lys342, Lys350, Lys354, and Lys358 each carry N6-succinyllysine; alternate. Residues Asn380 and Ser414 each contribute to the (3S)-3-hydroxy-3-methylglutaryl-CoA site. Ser433 carries the phosphoserine modification. Lys437 carries the N6-acetyllysine modification. Ser440 is subject to Phosphoserine. Lys447 is subject to N6-acetyllysine; alternate. Lys447 is modified (N6-succinyllysine; alternate). Ser456 carries the phosphoserine modification. The residue at position 473 (Lys473) is an N6-acetyllysine; alternate. At Lys473 the chain carries N6-succinyllysine; alternate. Ser477 carries the post-translational modification Phosphoserine.

It belongs to the thiolase-like superfamily. HMG-CoA synthase family. In terms of assembly, homodimer. Post-translationally, succinylated. Desuccinylated by SIRT5. Succinylation, at least at Lys-310, inhibits the enzymatic activity.

Its subcellular location is the mitochondrion. The enzyme catalyses acetoacetyl-CoA + acetyl-CoA + H2O = (3S)-3-hydroxy-3-methylglutaryl-CoA + CoA + H(+). Its pathway is metabolic intermediate biosynthesis; (R)-mevalonate biosynthesis; (R)-mevalonate from acetyl-CoA: step 2/3. Functionally, catalyzes the first irreversible step in ketogenesis, condensing acetyl-CoA to acetoacetyl-CoA to form HMG-CoA, which is converted by HMG-CoA reductase (HMGCR) into mevalonate. The sequence is that of Hydroxymethylglutaryl-CoA synthase, mitochondrial (HMGCS2) from Bos taurus (Bovine).